A 527-amino-acid polypeptide reads, in one-letter code: Glucose-6-phosphate isomerase (527 aa).

The active-site Proton donor is Glu-323. Residues His-352 and Lys-454 contribute to the active site.

This sequence belongs to the GPI family.

Its subcellular location is the cytoplasm. The enzyme catalyses alpha-D-glucose 6-phosphate = beta-D-fructose 6-phosphate. The protein operates within carbohydrate biosynthesis; gluconeogenesis. It participates in carbohydrate degradation; glycolysis; D-glyceraldehyde 3-phosphate and glycerone phosphate from D-glucose: step 2/4. Its function is as follows. Catalyzes the reversible isomerization of glucose-6-phosphate to fructose-6-phosphate. This Prochlorococcus marinus (strain MIT 9312) protein is Glucose-6-phosphate isomerase.